Here is a 124-residue protein sequence, read N- to C-terminus: Fluoride-specific ion channel FluC (124 aa).

Helical transmembrane passes span 3–23 (YLLVFLGGGLGAMFRHFINTV), 36–56 (TFFINVSGSLVMGLIAGYFAF), 66–86 (LFLMTGILGGYTTFSAFSLDA), and 100–120 (LYVLGSVALAIAGLFAGLALI). Na(+) is bound by residues Gly74 and Thr77.

It belongs to the fluoride channel Fluc/FEX (TC 1.A.43) family.

The protein localises to the cell inner membrane. The catalysed reaction is fluoride(in) = fluoride(out). Its activity is regulated as follows. Na(+) is not transported, but it plays an essential structural role and its presence is essential for fluoride channel function. Functionally, fluoride-specific ion channel. Important for reducing fluoride concentration in the cell, thus reducing its toxicity. The polypeptide is Fluoride-specific ion channel FluC (Rhodopseudomonas palustris (strain BisB5)).